A 1088-amino-acid chain; its full sequence is Serine/threonine-protein kinase LATS2 (1088 aa).

The segment at 24 to 49 (EGLKQPSKSSVQGLPAGPNSDTSLDA) is disordered. Ser-83 is subject to Phosphoserine; by AURKA. One can recognise a UBA domain in the interval 98–139 (EVNRQMLQELVNAGCDQEMAGRALKQTGSRSIEAALEYISKM). An interaction with ubiquitinated AMOTL2 region spans residues 101 to 141 (RQMLQELVNAGCDQEMAGRALKQTGSRSIEAALEYISKMGY). The segment covering 271-280 (RSPSFQSKTP) has biased composition (polar residues). Positions 271 to 323 (RSPSFQSKTPPETGGYASLPTKGQGGPPGAGLAFPPPAAGLYVPHPHHKQAGP) are disordered. Thr-279 carries the post-translational modification Phosphothreonine. Ser-380 bears the Phosphoserine mark. 2 disordered regions span residues 383-428 (KPGL…SLPA) and 454-483 (PQTA…AAEG). Over residues 404–413 (SRTNSFNSHQ) the composition is skewed to polar residues. Residues 466-478 (VPAPAPAPAPAPA) are compositionally biased toward pro residues. The short motif at 515 to 518 (PPPY) is the PPxY motif element. A disordered region spans residues 543–592 (SLRAGPNEPEGGDKSRKSAKGDKGGKDKKQIQTSPVPVRKNSRDEEKRES). The span at 553–572 (GGDKSRKSAKGDKGGKDKKQ) shows a compositional bias: basic and acidic residues. Ser-576 is modified (phosphoserine). Basic and acidic residues predominate over residues 583–592 (NSRDEEKRES). The region spanning 668 to 973 (FVKIKTLGIG…ADDLKAHPFF (306 aa)) is the Protein kinase domain. Residues 674–682 (LGIGAFGEV) and Lys-697 each bind ATP. Catalysis depends on Asp-791, which acts as the Proton acceptor. Residues 974-1052 (SAIDFSSDIR…RRFFDDNGYP (79 aa)) form the AGC-kinase C-terminal domain. Residues 994 to 1022 (SHPMDTSNFDPVDEESPWNDASEGSTKAW) form a disordered region. Residue Thr-1041 is modified to Phosphothreonine. A disordered region spans residues 1056–1088 (PKPSGAEASQAESSDLESSDLVDQTEGCQPVYV).

This sequence belongs to the protein kinase superfamily. AGC Ser/Thr protein kinase family. As to quaternary structure, interacts with and is phosphorylated by AURKA. Binds to AR. Interacts with AJUBA during mitosis and this complex regulates organization of the spindle apparatus through recruitment of gamma-tubulin to the centrosome. Interacts (via PPxY motif) with YAP1 (via WW domains). Interacts with MOB1A and MOB1B. Interacts with LIMD1, WTIP and AJUBA. Interacts with SNAI1. Interacts with WWC1, WWC2 and WWC3 (via their WW domains). Interacts (via UBA domain) with ubiquitinated AMOTL2; the interaction promotes LATS2 phosphorylation of YAP1. The cofactor is Mg(2+). In terms of processing, autophosphorylated and phosphorylated during M-phase and the G1/S-phase of the cell cycle. Phosphorylated and activated by STK3/MST2. Phosphorylated by MAP4Ks; in parallel to STK3/MST2 and resulting to its activation. Phosphorylation by NUAK2 may regulate its activity in phosphorylation and inactivation YAP1. As to expression, expressed at high levels in heart and skeletal muscle and at lower levels in all other tissues examined.

The protein localises to the cytoplasm. It is found in the cytoskeleton. It localises to the microtubule organizing center. The protein resides in the centrosome. Its subcellular location is the spindle pole. The protein localises to the nucleus. The enzyme catalyses L-seryl-[protein] + ATP = O-phospho-L-seryl-[protein] + ADP + H(+). It catalyses the reaction L-threonyl-[protein] + ATP = O-phospho-L-threonyl-[protein] + ADP + H(+). Negative regulator of YAP1 in the Hippo signaling pathway that plays a pivotal role in organ size control and tumor suppression by restricting proliferation and promoting apoptosis. The core of this pathway is composed of a kinase cascade wherein STK3/MST2 and STK4/MST1, in complex with its regulatory protein SAV1, phosphorylates and activates LATS1/2 in complex with its regulatory protein MOB1, which in turn phosphorylates and inactivates YAP1 oncoprotein and WWTR1/TAZ. Phosphorylation of YAP1 by LATS2 inhibits its translocation into the nucleus to regulate cellular genes important for cell proliferation, cell death, and cell migration. Also phosphorylates YAP1 in response to cell contact inhibition-driven WWP1 ubiquitination of AMOTL2, which results in LATS2 activation. Acts as a tumor suppressor which plays a critical role in centrosome duplication, maintenance of mitotic fidelity and genomic stability. Negatively regulates G1/S transition by down-regulating cyclin E/CDK2 kinase activity. Negative regulator of the androgen receptor. Phosphorylates SNAI1 in the nucleus leading to its nuclear retention and stabilization, which enhances its epithelial-mesenchymal transition and tumor cell invasion/migration activities. This tumor-promoting activity is independent of its effects upon YAP1 or WWTR1/TAZ. Acts as an activator of the NLRP3 inflammasome by mediating phosphorylation of 'Ser-265' of NLRP3 following NLRP3 palmitoylation, promoting NLRP3 activation by NEK7. The sequence is that of Serine/threonine-protein kinase LATS2 from Homo sapiens (Human).